We begin with the raw amino-acid sequence, 380 residues long: Endo-polygalacturonase (380 aa).

The first 17 residues, 1 to 17, serve as a signal peptide directing secretion; sequence MVHILSSALSLLRLGAA. Positions 18-42 are excised as a propeptide; sequence VSAAPAPAPTAAPNVADALAAVEKR. A disulfide bond links cysteine 46 and cysteine 64. PbH1 repeat units lie at residues 178-207, 208-229, 230-250, 259-280, 288-310, and 322-343; these read ASGL…DVGS, STDI…AINS, GTGI…SIGS, VSDV…RIKT, VSGV…VIEQ, and TSGV…SSSA. The Proton donor role is filled by aspartate 222. Cysteine 224 and cysteine 240 are disulfide-bonded. The active site involves histidine 244. A disulfide bridge connects residues cysteine 350 and cysteine 353. The N-linked (GlcNAc...) asparagine glycan is linked to asparagine 361. A disulfide bond links cysteine 371 and cysteine 380.

This sequence belongs to the glycosyl hydrolase 28 family.

The protein resides in the secreted. The catalysed reaction is (1,4-alpha-D-galacturonosyl)n+m + H2O = (1,4-alpha-D-galacturonosyl)n + (1,4-alpha-D-galacturonosyl)m.. This chain is Endo-polygalacturonase (PG1), found in Sclerotinia sclerotiorum (White mold).